The sequence spans 1291 residues: DNA-directed RNA polymerase subunit beta (1291 aa).

This sequence belongs to the RNA polymerase beta chain family. In terms of assembly, the RNAP catalytic core consists of 2 alpha, 1 beta, 1 beta' and 1 omega subunit. When a sigma factor is associated with the core the holoenzyme is formed, which can initiate transcription.

The catalysed reaction is RNA(n) + a ribonucleoside 5'-triphosphate = RNA(n+1) + diphosphate. DNA-dependent RNA polymerase catalyzes the transcription of DNA into RNA using the four ribonucleoside triphosphates as substrates. In Mycoplasma mycoides subsp. mycoides SC (strain CCUG 32753 / NCTC 10114 / PG1), this protein is DNA-directed RNA polymerase subunit beta.